A 472-amino-acid polypeptide reads, in one-letter code: Homeobox protein PKNOX2 (472 aa).

A disordered region spans residues methionine 1 to aspartate 62. The span at aspartate 26–serine 38 shows a compositional bias: polar residues. The span at serine 46 to valine 56 shows a compositional bias: low complexity. The 84-residue stretch at glycine 96–aspartate 179 folds into the MEIS N-terminal domain. The homeobox DNA-binding region spans lysine 291–methionine 350. Disordered regions lie at residues leucine 351 to proline 371, glutamine 386 to leucine 405, and methionine 422 to glutamate 472. Basic residues predominate over residues lysine 361–proline 371. The segment covering leucine 429–glutamate 454 has biased composition (acidic residues).

The protein belongs to the TALE/MEIS homeobox family.

It is found in the nucleus. The polypeptide is Homeobox protein PKNOX2 (PKNOX2) (Homo sapiens (Human)).